Consider the following 560-residue polypeptide: DNA ligase B (560 aa).

Catalysis depends on lysine 124, which acts as the N6-AMP-lysine intermediate.

The protein belongs to the NAD-dependent DNA ligase family. LigB subfamily.

The catalysed reaction is NAD(+) + (deoxyribonucleotide)n-3'-hydroxyl + 5'-phospho-(deoxyribonucleotide)m = (deoxyribonucleotide)n+m + AMP + beta-nicotinamide D-nucleotide.. In terms of biological role, catalyzes the formation of phosphodiester linkages between 5'-phosphoryl and 3'-hydroxyl groups in double-stranded DNA using NAD as a coenzyme and as the energy source for the reaction. This chain is DNA ligase B, found in Shigella flexneri serotype 5b (strain 8401).